Here is a 233-residue protein sequence, read N- to C-terminus: Putative glutathione peroxidase 7, chloroplastic (233 aa).

A chloroplast-targeting transit peptide spans Met1–Arg69. The active site involves Cys108.

Belongs to the glutathione peroxidase family.

It localises to the plastid. Its subcellular location is the chloroplast. It catalyses the reaction 2 glutathione + H2O2 = glutathione disulfide + 2 H2O. May constitute a glutathione peroxidase-like protective system against oxidative stresses. This chain is Putative glutathione peroxidase 7, chloroplastic (GPX7), found in Arabidopsis thaliana (Mouse-ear cress).